Reading from the N-terminus, the 103-residue chain is Large ribosomal subunit protein bL21 (103 aa).

Basic residues predominate over residues 83-92 (YRRKKGHRQP). The interval 83–103 (YRRKKGHRQPFSRVTVEKIEA) is disordered.

It belongs to the bacterial ribosomal protein bL21 family. As to quaternary structure, part of the 50S ribosomal subunit. Contacts protein L20.

In terms of biological role, this protein binds to 23S rRNA in the presence of protein L20. The polypeptide is Large ribosomal subunit protein bL21 (Pelotomaculum thermopropionicum (strain DSM 13744 / JCM 10971 / SI)).